Consider the following 152-residue polypeptide: Cyanate hydratase (152 aa).

Residues Arg98, Glu101, and Ser124 contribute to the active site.

It belongs to the cyanase family.

The enzyme catalyses cyanate + hydrogencarbonate + 3 H(+) = NH4(+) + 2 CO2. Catalyzes the reaction of cyanate with bicarbonate to produce ammonia and carbon dioxide. The protein is Cyanate hydratase of Uncinocarpus reesii (strain UAMH 1704).